A 289-amino-acid polypeptide reads, in one-letter code: Protoheme IX farnesyltransferase 2 (289 aa).

Transmembrane regions (helical) follow at residues 1-21, 28-48, 76-96, 100-120, 125-145, 155-175, 199-219, 221-241, and 260-280; these read MIKP…FLLA, LTLM…GCGL, YSVL…LAIF, IALL…SLYM, VYGT…GYCA, VILL…IAIF, LHIV…PLAG, TGIA…GMAL, and CSIV…QLVV.

This sequence belongs to the UbiA prenyltransferase family. Protoheme IX farnesyltransferase subfamily.

It localises to the cell inner membrane. It catalyses the reaction heme b + (2E,6E)-farnesyl diphosphate + H2O = Fe(II)-heme o + diphosphate. Its pathway is porphyrin-containing compound metabolism; heme O biosynthesis; heme O from protoheme: step 1/1. Functionally, converts heme B (protoheme IX) to heme O by substitution of the vinyl group on carbon 2 of heme B porphyrin ring with a hydroxyethyl farnesyl side group. This Shewanella woodyi (strain ATCC 51908 / MS32) protein is Protoheme IX farnesyltransferase 2.